A 2604-amino-acid chain; its full sequence is BEACH domain-containing protein B (2604 aa).

Positions 1761–1912 constitute a BEACH-type PH domain; that stretch reads VGTSEVLTSV…NAKEVGMLIV (152 aa). Residues 1936–2226 enclose the BEACH domain; it reads DRRIAMEMAE…QIFRKKHPRR (291 aa). WD repeat units follow at residues 2254–2293, 2368–2407, 2433–2474, 2476–2515, 2516–2557, and 2558–2596; these read HSPS…SGGN, HHKD…TPEK, GHDD…RSLK, PSGS…LASS, ESNG…KRYN, and GAGK…HRKP.

Its function is as follows. May be involved in the suppression of BCHC1 activity. In Arabidopsis thaliana (Mouse-ear cress), this protein is BEACH domain-containing protein B.